We begin with the raw amino-acid sequence, 83 residues long: Hainantoxin-III 9 (83 aa).

The signal sequence occupies residues 1–21 (MKASMFLALAGLALLFVVCYA). A propeptide spanning residues 22–48 (SESEEKEFPIELLSKIFAVDVFKGEER) is cleaved from the precursor. Disulfide bonds link Cys-50/Cys-65, Cys-57/Cys-70, and Cys-64/Cys-77. At Leu-81 the chain carries Leucine amide.

It belongs to the neurotoxin 10 (Hwtx-1) family. 15 (Hntx-3) subfamily. Monomer. As to expression, expressed by the venom gland.

It is found in the secreted. Functionally, selective antagonist of neuronal tetrodotoxin (TTX)-sensitive voltage-gated sodium channels (IC(50)=1270 nM on Nav1.1/SCN1A, 270 nM on Nav1.2/SCN2A, 491 nM on Nav1.3/SCN3A and 232 nM on Nav1.7/SCN9A). This toxin suppress Nav1.7 current amplitude without significantly altering the activation, inactivation, and repriming kinetics. Short extreme depolarizations partially activate the toxin-bound channel, indicating voltage-dependent inhibition of this toxin. This toxin increases the deactivation of the Nav1.7 current after extreme depolarizations. The toxin-Nav1.7 complex is gradually dissociated upon prolonged strong depolarizations in a voltage-dependent manner, and the unbound toxin rebinds to Nav1.7 after a long repolarization. Moreover, analysis of chimeric channels showed that the DIIS3-S4 linker is critical for toxin binding to Nav1.7. These data are consistent with this toxin interacting with Nav1.7 site 4 and trapping the domain II voltage sensor in the closed state. The polypeptide is Hainantoxin-III 9 (Cyriopagopus hainanus (Chinese bird spider)).